The sequence spans 449 residues: Glucose-6-phosphate isomerase (449 aa).

The active-site Proton donor is Glu-291. Residues His-312 and Lys-426 contribute to the active site.

This sequence belongs to the GPI family.

Its subcellular location is the cytoplasm. It carries out the reaction alpha-D-glucose 6-phosphate = beta-D-fructose 6-phosphate. It functions in the pathway carbohydrate biosynthesis; gluconeogenesis. Its pathway is carbohydrate degradation; glycolysis; D-glyceraldehyde 3-phosphate and glycerone phosphate from D-glucose: step 2/4. In terms of biological role, catalyzes the reversible isomerization of glucose-6-phosphate to fructose-6-phosphate. This is Glucose-6-phosphate isomerase from Enterococcus faecalis (strain ATCC 700802 / V583).